The sequence spans 509 residues: ATP synthase subunit alpha (509 aa).

169 to 176 (GDRQTGKT) lines the ATP pocket.

The protein belongs to the ATPase alpha/beta chains family. F-type ATPases have 2 components, CF(1) - the catalytic core - and CF(0) - the membrane proton channel. CF(1) has five subunits: alpha(3), beta(3), gamma(1), delta(1), epsilon(1). CF(0) has three main subunits: a(1), b(2) and c(9-12). The alpha and beta chains form an alternating ring which encloses part of the gamma chain. CF(1) is attached to CF(0) by a central stalk formed by the gamma and epsilon chains, while a peripheral stalk is formed by the delta and b chains.

It is found in the cell inner membrane. It catalyses the reaction ATP + H2O + 4 H(+)(in) = ADP + phosphate + 5 H(+)(out). Its function is as follows. Produces ATP from ADP in the presence of a proton gradient across the membrane. The alpha chain is a regulatory subunit. The sequence is that of ATP synthase subunit alpha from Brucella abortus (strain S19).